A 429-amino-acid chain; its full sequence is Histidine--tRNA ligase (429 aa).

It belongs to the class-II aminoacyl-tRNA synthetase family. Homodimer.

The protein localises to the cytoplasm. It carries out the reaction tRNA(His) + L-histidine + ATP = L-histidyl-tRNA(His) + AMP + diphosphate + H(+). The sequence is that of Histidine--tRNA ligase from Prochlorococcus marinus subsp. pastoris (strain CCMP1986 / NIES-2087 / MED4).